The chain runs to 364 residues: Spermidine/putrescine import ATP-binding protein PotA (364 aa).

In terms of domain architecture, ABC transporter spans 5–235 (LSLKSVSKSY…PVNRFVADFI (231 aa)). 37 to 44 (GPSGCGKT) contacts ATP.

The protein belongs to the ABC transporter superfamily. Spermidine/putrescine importer (TC 3.A.1.11.1) family. The complex is composed of two ATP-binding proteins (PotA), two transmembrane proteins (PotB and PotC) and a solute-binding protein (PotD).

Its subcellular location is the cell membrane. It carries out the reaction ATP + H2O + polyamine-[polyamine-binding protein]Side 1 = ADP + phosphate + polyamineSide 2 + [polyamine-binding protein]Side 1.. Its function is as follows. Part of the ABC transporter complex PotABCD involved in spermidine/putrescine import. Responsible for energy coupling to the transport system. This Staphylococcus aureus (strain USA300) protein is Spermidine/putrescine import ATP-binding protein PotA.